The chain runs to 291 residues: Stomatin-like protein 3 (291 aa).

Serine 7 carries the phosphoserine modification. Residues 29 to 49 (WILFSLSFLLVIITFPISIWM) traverse the membrane as a helical; Signal-anchor for type III membrane protein segment. Topologically, residues 50–291 (CLKIIKEYER…DNHKKLPNKA (242 aa)) are cytoplasmic. Serine 241 is modified (phosphoserine).

It belongs to the band 7/mec-2 family. As to quaternary structure, homodimer. Interacts with PIEZO1 and PIEZO2.

It localises to the cell membrane. Functionally, required for the function of many mechanoreceptors. Modulate mechanotransduction channels and acid-sensing ion channels (ASIC) proteins. Potentiates PIEZO1 and PIEZO2 function by increasing their sensitivity to mechanical stimulations. The sequence is that of Stomatin-like protein 3 (STOML3) from Homo sapiens (Human).